The sequence spans 461 residues: Acetylcholine receptor subunit alpha (461 aa).

A signal peptide spans 1–24 (MILCSYWHVGLVLLLFSCCGLVLG). Over 25–234 (SEHETRLVAN…ITYHFIMQRI (210 aa)) the chain is Extracellular. Cystine bridges form between Cys152-Cys166 and Cys216-Cys217. Residue Asn165 is glycosylated (N-linked (GlcNAc...) asparagine). 3 consecutive transmembrane segments (helical) span residues 235 to 259 (PLYF…VFYL), 267 to 285 (MTLS…LVIV), and 301 to 320 (YMLF…VVVI). Topologically, residues 321–432 (NTHHRSPSTH…WKYVAMVIDH (112 aa)) are cytoplasmic. The helical transmembrane segment at 433–451 (ILLCVFMLICIIGTVSVFA) threads the bilayer.

The protein belongs to the ligand-gated ion channel (TC 1.A.9) family. Acetylcholine receptor (TC 1.A.9.1) subfamily. Alpha-1/CHRNA1 sub-subfamily. In terms of assembly, pentamer of two alpha chains, and one each of the beta, delta, and gamma chains.

It localises to the postsynaptic cell membrane. It is found in the cell membrane. It carries out the reaction K(+)(in) = K(+)(out). It catalyses the reaction Na(+)(in) = Na(+)(out). Upon acetylcholine binding, the AChR responds by an extensive change in conformation that affects all subunits and leads to opening of an ion-conducting channel across the plasma membrane. In Tetronarce californica (Pacific electric ray), this protein is Acetylcholine receptor subunit alpha (CHRNA1).